The primary structure comprises 331 residues: Flavonol synthase 1 (331 aa).

The Fe2OG dioxygenase domain occupies 191–292 (DAIELLLKIN…RMSWPVFCSP (102 aa)). Fe cation-binding residues include His-217, Asp-219, and His-273. 2-oxoglutarate is bound at residue Arg-283.

It belongs to the iron/ascorbate-dependent oxidoreductase family. The cofactor is L-ascorbate. Requires Fe(2+) as cofactor. As to expression, expressed in young cromes.

It catalyses the reaction a (2R,3R)-dihydroflavonol + 2-oxoglutarate + O2 = a flavonol + succinate + CO2 + H2O. The enzyme catalyses (2R,3R)-dihydrokaempferol + 2-oxoglutarate + O2 = kaempferol + succinate + CO2 + H2O + H(+). The catalysed reaction is (2R,3R)-dihydroquercetin + 2-oxoglutarate + O2 = quercetin + succinate + CO2 + H2O + H(+). It carries out the reaction (2R,3R)-dihydromyricetin + 2-oxoglutarate + O2 = myricetin + succinate + CO2 + H2O + H(+). It participates in flavonoid metabolism. Catalyzes the formation of flavonols from dihydroflavonols. Can act on dihydrokaempferol to produce kaempferol, on dihydroquercetin to produce quercitin and on dihydromyricetin to produce myricetin. The polypeptide is Flavonol synthase 1 (Crocosmia x crocosmiiflora (Montbretia)).